The following is a 90-amino-acid chain: Acylphosphatase (90 aa).

An Acylphosphatase-like domain is found at 5 to 90; that stretch reads CVKASVKGIV…WRHIDGFEIK (86 aa). Residues R20 and N38 contribute to the active site.

Belongs to the acylphosphatase family.

It catalyses the reaction an acyl phosphate + H2O = a carboxylate + phosphate + H(+). This is Acylphosphatase (acyP) from Photobacterium profundum (strain SS9).